The sequence spans 144 residues: MGPNRIYISVGYSTFGMLVGFSAFIVWNVVYKQPWTAAMGGLSGVLALWALVTHIMYIQDYWRTWLKGLKFFMFVSSVFSLLAVAAFATFITLSVIEKQSLSDPKSFYLSAVWSFMTLKWAFLLGLYSYRYRQEFADISILSDF.

4 consecutive transmembrane segments (helical) span residues 6–26 (IYISVGYSTFGMLVGFSAFIV), 38–58 (AMGGLSGVLALWALVTHIMYI), 71–91 (FFMFVSSVFSLLAVAAFATFI), and 107–127 (FYLSAVWSFMTLKWAFLLGLY). A Di-leucine motif motif is present at residues 140 to 141 (IL).

It belongs to the HRG family.

The protein localises to the endosome membrane. Its subcellular location is the lysosome membrane. The protein resides in the cytoplasmic vesicle. It localises to the phagosome membrane. The enzyme catalyses heme b(in) = heme b(out). Heme transporter that regulates intracellular heme availability through the endosomal or lysosomal compartment. In macrophages, is the heme transporter for heme-iron recycling. Essential for macrophage iron homeostasis, transports heme from the phagolysosome to the cytoplasm during erythrophagocytosis (EP). This is Heme transporter hrg1-B (slc48a1a) from Danio rerio (Zebrafish).